The chain runs to 232 residues: UPF0758 protein Amet_2289 (232 aa).

An MPN domain is found at R110–M232. 3 residues coordinate Zn(2+): H181, H183, and D194. The short motif at H181–D194 is the JAMM motif element.

The protein belongs to the UPF0758 family.

The protein is UPF0758 protein Amet_2289 of Alkaliphilus metalliredigens (strain QYMF).